A 300-amino-acid chain; its full sequence is MKVLWAVLVVTLLAGCQADVEPELEAQEPAVWQNGQPWELALGRFWDYLRWVQTLSDQVQEELLSSQVTQELTVLMEDTMKEVKAYKSELEQELAPMAEETKARLSKELKAAQARLGADMEEVRNRLSQYRGEVQSMLGHSAEELRARLATHLRKLRKRLLRDAEDLQKRLAVYKAGASEGAERSVSAIRERLGSLVEQGRLRTAALTSQPLQERAQAWGERLRGRLEEVGSKARDRLDEVREQMEEVRLKVEEQAEAFQARLKGWFEPMMEDIRRQWADLIEKMQAAVGTSTPAPTQKP.

The signal sequence occupies residues 1–18 (MKVLWAVLVVTLLAGCQA). The interval 74 to 246 (VLMEDTMKEV…RLDEVREQME (173 aa)) is 8 X 22 AA approximate tandem repeats. Repeat copies occupy residues 75 to 95 (LMED…QELA), 96 to 117 (PMAE…ARLG), 118 to 139 (ADME…SMLG), 140 to 161 (HSAE…KRLL), 162 to 183 (RDAE…EGAE), 184 to 205 (RSVS…LRTA), 206 to 224 (ALTS…ERLR), and 225 to 243 (GRLE…EVRE). Methionine 137 is subject to Methionine sulfoxide. Position 141 is a phosphoserine (serine 141). The tract at residues 152–162 (HLRKLRKRLLR) is LDL and other lipoprotein receptors binding. Heparin is bound at residue 156–159 (LRKR). Residues 204–274 (TAALTSQPLQ…GWFEPMMEDI (71 aa)) are lipid-binding and lipoprotein association. 220–227 (GERLRGRL) serves as a coordination point for heparin. Residues 262-274 (RLKGWFEPMMEDI) form a specificity for association with VLDL region.

The protein belongs to the apolipoprotein A1/A4/E family. Homotetramer. May interact with ABCA1; functionally associated with ABCA1 in the biogenesis of HDLs. May interact with APP/A4 amyloid-beta peptide; the interaction is extremely stable in vitro but its physiological significance is unclear. May interact with MAPT. May interact with MAP2. In the cerebrospinal fluid, interacts with secreted SORL1. Interacts with PMEL; this allows the loading of PMEL luminal fragment on ILVs to induce fibril nucleation. Post-translationally, APOE exists as multiple glycosylated and sialylated glycoforms within cells and in plasma. The extent of glycosylation and sialylation are tissue and context specific. Glycated in plasma VLDL. In terms of processing, phosphorylated by FAM20C in the extracellular medium.

It is found in the secreted. The protein resides in the extracellular space. The protein localises to the extracellular matrix. Its subcellular location is the extracellular vesicle. It localises to the endosome. It is found in the multivesicular body. Its function is as follows. APOE is an apolipoprotein, a protein associating with lipid particles, that mainly functions in lipoprotein-mediated lipid transport between organs via the plasma and interstitial fluids. APOE is a core component of plasma lipoproteins and is involved in their production, conversion and clearance. Apolipoproteins are amphipathic molecules that interact both with lipids of the lipoprotein particle core and the aqueous environment of the plasma. As such, APOE associates with chylomicrons, chylomicron remnants, very low density lipoproteins (VLDL) and intermediate density lipoproteins (IDL) but shows a preferential binding to high-density lipoproteins (HDL). It also binds a wide range of cellular receptors including the LDL receptor/LDLR, the LDL receptor-related proteins LRP1, LRP2 and LRP8 and the very low-density lipoprotein receptor/VLDLR that mediate the cellular uptake of the APOE-containing lipoprotein particles. Finally, APOE also has a heparin-binding activity and binds heparan-sulfate proteoglycans on the surface of cells, a property that supports the capture and the receptor-mediated uptake of APOE-containing lipoproteins by cells. A main function of APOE is to mediate lipoprotein clearance through the uptake of chylomicrons, VLDLs, and HDLs by hepatocytes. APOE is also involved in the biosynthesis by the liver of VLDLs as well as their uptake by peripheral tissues ensuring the delivery of triglycerides and energy storage in muscle, heart and adipose tissues. By participating in the lipoprotein-mediated distribution of lipids among tissues, APOE plays a critical role in plasma and tissues lipid homeostasis. APOE is also involved in two steps of reverse cholesterol transport, the HDLs-mediated transport of cholesterol from peripheral tissues to the liver, and thereby plays an important role in cholesterol homeostasis. First, it is functionally associated with ABCA1 in the biogenesis of HDLs in tissues. Second, it is enriched in circulating HDLs and mediates their uptake by hepatocytes. APOE also plays an important role in lipid transport in the central nervous system, regulating neuron survival and sprouting. This is Apolipoprotein E (APOE) from Dinomys branickii (Pacarana).